Consider the following 434-residue polypeptide: GPI mannosyltransferase 2 (434 aa).

Helical transmembrane passes span 22-42 (LSLAFWLWKAFVFLIIIGCPG), 109-129 (ILSFLTSVALSHIAHYFSVLA), 145-165 (GALISFLSATLHIICPAGAFL), 170-190 (GESLFSFLNITGYFLYSSSLL), 210-230 (LFSIATAVRSNGILSGALFAF), 252-272 (LGVIVVGGCVIALGLIVPQWI), 311-331 (YWTLSNLPLFILAFPMLFLMC), 354-374 (LAAPNGLLAVMAFTSYHVQII), 377-397 (ISSGYPLWYWYIICQLSSHVA), and 411-431 (IAIQGMVIYAIVQAVLFGSFL).

Belongs to the PIGV family.

It localises to the endoplasmic reticulum membrane. Its pathway is glycolipid biosynthesis; glycosylphosphatidylinositol-anchor biosynthesis. In terms of biological role, mannosyltransferase involved in glycosylphosphatidylinositol-anchor biosynthesis. Transfers the second mannose to the glycosylphosphatidylinositol during GPI precursor assembly. The polypeptide is GPI mannosyltransferase 2 (gpi18) (Aspergillus oryzae (strain ATCC 42149 / RIB 40) (Yellow koji mold)).